The sequence spans 224 residues: Glutathione S-transferase U8 (224 aa).

Residues 5–85 (EHVKLLGLWG…YIEDTWKTTH (81 aa)) form the GST N-terminal domain. Residues 15–16 (SP), 42–43 (NR), 56–57 (KV), and 69–70 (ES) each bind glutathione. In terms of domain architecture, GST C-terminal spans 91-213 (DPYERAMARF…LPPKEKLVAV (123 aa)). A Phosphothreonine modification is found at threonine 152.

This sequence belongs to the GST superfamily. Tau family.

Its subcellular location is the cytoplasm. The protein localises to the cytosol. It carries out the reaction RX + glutathione = an S-substituted glutathione + a halide anion + H(+). Its function is as follows. May be involved in the conjugation of reduced glutathione to a wide number of exogenous and endogenous hydrophobic electrophiles and have a detoxification role against certain herbicides. The polypeptide is Glutathione S-transferase U8 (GSTU8) (Arabidopsis thaliana (Mouse-ear cress)).